The chain runs to 373 residues: Mating-type protein A-2 (373 aa).

The disordered stretch occupies residues 1 to 22; it reads MNLLNMQPKRSEQPAMFEENRA.

To P.anserina SMR1.

Its function is as follows. Required, together with mating-type protein A-3, for efficient ascospore formation. The protein is Mating-type protein A-2 (matA-2) of Neurospora crassa (strain ATCC 24698 / 74-OR23-1A / CBS 708.71 / DSM 1257 / FGSC 987).